Here is a 247-residue protein sequence, read N- to C-terminus: AA9 family lytic polysaccharide monooxygenase A (247 aa).

Residues 1–19 (MVRLASLAVLGSVIATASA) form the signal peptide. Residues His-20 and His-100 each contribute to the Cu(2+) site. The cysteines at positions 60 and 185 are disulfide-linked. Residue His-165 coordinates O2. Tyr-182 contacts Cu(2+). N-linked (GlcNAc...) asparagine glycosylation is present at Asn-193.

The protein belongs to the polysaccharide monooxygenase AA9 family. Cu(2+) is required as a cofactor.

It is found in the secreted. It catalyses the reaction [(1-&gt;4)-beta-D-glucosyl]n+m + reduced acceptor + O2 = 4-dehydro-beta-D-glucosyl-[(1-&gt;4)-beta-D-glucosyl]n-1 + [(1-&gt;4)-beta-D-glucosyl]m + acceptor + H2O.. Its function is as follows. Lytic polysaccharide monooxygenase (LPMO) that depolymerizes polysaccharides via the oxidation of scissile alpha- or beta-(1-4)-glycosidic bonds, yielding C4 oxidation products. Catalysis by LPMOs requires the reduction of the active-site copper from Cu(II) to Cu(I) by a reducing agent and H(2)O(2) or O(2) as a cosubstrate. Shows C4-oxidative cleavage of amorphous cellulose and soluble cello-oligosaccharides. Also active on xyloglucan, mixed-linkage beta-glucan, and glucomannan. Not active on crystalline forms of cellulose. Has higher affinity for linear substrates compared to branched substrates. Catalyzes a fast and specific peroxygenase reaction that is at least two orders of magnitude faster than the apparent monooxygenase reaction. This Schizophyllum commune (strain H4-8 / FGSC 9210) (Split gill fungus) protein is AA9 family lytic polysaccharide monooxygenase A.